Reading from the N-terminus, the 131-residue chain is Leptin receptor overlapping transcript-like 1 (131 aa).

Helical transmembrane passes span 7-27, 32-52, 69-89, and 100-120; these read LISL…GCAL, QYWP…YCIA, LAIF…IVFA, and ALVL…FLVF.

The protein belongs to the OB-RGRP/VPS55 family.

It is found in the membrane. Negatively regulates growth hormone (GH) receptor cell surface expression in liver. May play a role in liver resistance to GH during periods of reduced nutrient availability. This Bos taurus (Bovine) protein is Leptin receptor overlapping transcript-like 1 (LEPROTL1).